Reading from the N-terminus, the 294-residue chain is Mating type protein mtA-1 (294 aa).

Residues 46-101 constitute a DNA-binding region (alpha box); the sequence is TAKKKVNGFMGFRSNYSPLFSYLPQKMRSPFMTILWQYDPYHNEWDFMCSVYSSIR.

Belongs to the MATALPHA1 family.

It localises to the nucleus. Mating type proteins are sequence specific DNA-binding proteins that act as master switches in fungal differentiation by controlling gene expression in a cell type-specific fashion. Transcriptional activator that induces the transcription of alpha-specific genes. In Sordaria equina, this protein is Mating type protein mtA-1 (MTA1).